A 158-amino-acid polypeptide reads, in one-letter code: 6,7-dimethyl-8-ribityllumazine synthase (158 aa).

5-amino-6-(D-ribitylamino)uracil-binding positions include Phe22, 57–59 (AVE), and 81–83 (AVI). Residue 86–87 (GT) participates in (2S)-2-hydroxy-3-oxobutyl phosphate binding. The active-site Proton donor is the His89. 5-amino-6-(D-ribitylamino)uracil is bound at residue Phe114. Arg128 contributes to the (2S)-2-hydroxy-3-oxobutyl phosphate binding site.

This sequence belongs to the DMRL synthase family. In terms of assembly, forms an icosahedral capsid composed of 60 subunits, arranged as a dodecamer of pentamers.

It catalyses the reaction (2S)-2-hydroxy-3-oxobutyl phosphate + 5-amino-6-(D-ribitylamino)uracil = 6,7-dimethyl-8-(1-D-ribityl)lumazine + phosphate + 2 H2O + H(+). Its pathway is cofactor biosynthesis; riboflavin biosynthesis; riboflavin from 2-hydroxy-3-oxobutyl phosphate and 5-amino-6-(D-ribitylamino)uracil: step 1/2. In terms of biological role, catalyzes the formation of 6,7-dimethyl-8-ribityllumazine by condensation of 5-amino-6-(D-ribitylamino)uracil with 3,4-dihydroxy-2-butanone 4-phosphate. This is the penultimate step in the biosynthesis of riboflavin. The protein is 6,7-dimethyl-8-ribityllumazine synthase of Shewanella putrefaciens (strain CN-32 / ATCC BAA-453).